A 287-amino-acid chain; its full sequence is Protoheme IX farnesyltransferase (287 aa).

7 consecutive transmembrane segments (helical) span residues Leu-19–Thr-39, Met-100–Val-120, Phe-134–Val-154, Met-162–Ala-182, Val-212–Gly-232, Val-233–Ala-253, and Val-267–Phe-287.

It belongs to the UbiA prenyltransferase family. Protoheme IX farnesyltransferase subfamily.

The protein resides in the cell inner membrane. It carries out the reaction heme b + (2E,6E)-farnesyl diphosphate + H2O = Fe(II)-heme o + diphosphate. It functions in the pathway porphyrin-containing compound metabolism; heme O biosynthesis; heme O from protoheme: step 1/1. In terms of biological role, converts heme B (protoheme IX) to heme O by substitution of the vinyl group on carbon 2 of heme B porphyrin ring with a hydroxyethyl farnesyl side group. This chain is Protoheme IX farnesyltransferase, found in Nitratidesulfovibrio vulgaris (strain DP4) (Desulfovibrio vulgaris).